The sequence spans 368 residues: 3-dehydroquinate synthase (368 aa).

Residues 71-76 (DGEAFK), 105-109 (GVVGD), 129-130 (TT), lysine 142, lysine 151, and 169-172 (TLRT) each bind NAD(+). Residues glutamate 184, histidine 247, and histidine 264 each coordinate Zn(2+).

It belongs to the sugar phosphate cyclases superfamily. Dehydroquinate synthase family. Co(2+) is required as a cofactor. Zn(2+) serves as cofactor. The cofactor is NAD(+).

It is found in the cytoplasm. It carries out the reaction 7-phospho-2-dehydro-3-deoxy-D-arabino-heptonate = 3-dehydroquinate + phosphate. It functions in the pathway metabolic intermediate biosynthesis; chorismate biosynthesis; chorismate from D-erythrose 4-phosphate and phosphoenolpyruvate: step 2/7. Catalyzes the conversion of 3-deoxy-D-arabino-heptulosonate 7-phosphate (DAHP) to dehydroquinate (DHQ). In Cupriavidus pinatubonensis (strain JMP 134 / LMG 1197) (Cupriavidus necator (strain JMP 134)), this protein is 3-dehydroquinate synthase.